A 305-amino-acid chain; its full sequence is Protoheme IX farnesyltransferase (305 aa).

Transmembrane regions (helical) follow at residues 31-51 (VMSLVIFTGFVGMWLAPYSVH), 52-72 (PFIAGIAVVCIALGAGSAGAI), 96-118 (VIESDEALSFGLITGFFAVFFMA), 123-145 (LLASFLLLFTIFYYICIYTIWLK), 151-171 (NIVIGGVSGALPPVIGYAAVS), 179-199 (IILFLIIFIWTPPHSWALALF), 225-245 (ILIYSILLFIVSLMPFFIGMN), 247-267 (FIYLIISGILGVVFLYYAGSL), and 281-301 (FAYSIFYLFFIFLLLYSTNTI).

This sequence belongs to the UbiA prenyltransferase family. Protoheme IX farnesyltransferase subfamily.

It is found in the cell membrane. It carries out the reaction heme b + (2E,6E)-farnesyl diphosphate + H2O = Fe(II)-heme o + diphosphate. Its pathway is porphyrin-containing compound metabolism; heme O biosynthesis; heme O from protoheme: step 1/1. Its function is as follows. Converts heme B (protoheme IX) to heme O by substitution of the vinyl group on carbon 2 of heme B porphyrin ring with a hydroxyethyl farnesyl side group. The chain is Protoheme IX farnesyltransferase from Rickettsia africae (strain ESF-5).